The chain runs to 468 residues: ATP synthase subunit beta (468 aa).

Residue 155–162 (GGAGVGKT) participates in ATP binding.

This sequence belongs to the ATPase alpha/beta chains family. F-type ATPases have 2 components, CF(1) - the catalytic core - and CF(0) - the membrane proton channel. CF(1) has five subunits: alpha(3), beta(3), gamma(1), delta(1), epsilon(1). CF(0) has three main subunits: a(1), b(2) and c(9-12). The alpha and beta chains form an alternating ring which encloses part of the gamma chain. CF(1) is attached to CF(0) by a central stalk formed by the gamma and epsilon chains, while a peripheral stalk is formed by the delta and b chains.

The protein resides in the cell membrane. It carries out the reaction ATP + H2O + 4 H(+)(in) = ADP + phosphate + 5 H(+)(out). Functionally, produces ATP from ADP in the presence of a proton gradient across the membrane. The catalytic sites are hosted primarily by the beta subunits. The protein is ATP synthase subunit beta of Bacillus cereus (strain B4264).